We begin with the raw amino-acid sequence, 1173 residues long: MSRQDENSALLANNENNKPSYTGNENGVYDNFKLSKSQLSDLHNPKSIRSFVRLFGYESNSLFKYLKTDKNAGISLPEISNYRKTNRYKNYGDNSLPERIPKSFLQLVWAAFNDKTMQLLTVAAVVSFVLGLYELWMQPPQYDPEGNKIKQVDWIEGVAIMIAVFVVVLVSAANDYQKELQFAKLNKKKENRKIIVIRNDQEILISIHHVLVGDVISLQTGDVVPADCVMISGKCEADESSITGESNTIQKFPVDNSLRDFKKFNSIDSHNHSKPLDIGDVNEDGNKIADCMLISGSRILSGLGRGVITSVGINSVYGQTMTSLNAEPESTPLQLHLSQLADNISVYGCVSAIILFLVLFTRYLFYIIPEDGRFHDLDPAQKGSKFMNIFITSITVIVVAVPEGLPLAVTLALAFATTRMTKDGNLVRVLRSCETMGSATAVCSDKTGTLTENVMTVVRGFPGNSKFDDSKSLPVSEQRKLNSKKVFEENCSSSLRNDLLANIVLNSTAFENRDYKKNDKNTNGSKNMSKNLSFLDKCKSRLSFFKKGNREDDEDQLFKNVNKGRQEPFIGSKTETALLSLARLSLGLQPGELQYLRDQPMEKFNIEKVVQTIPFESSRKWAGLVVKYKEGKNKKPFYRFFIKGAAEIVSKNCSYKRNSDDTLEEINEDNKKETDDEIKNLASDALRAISVAHKDFCECDSWPPEQLRDKDSPNIAALDLLFNSQKGLILDGLLGIQDPLRAGVRESVQQCQRAGVTVRMVTGDNILTAKAIARNCAILSTDISSEAYSAMEGTEFRKLTKNERIRILPNLRVLARSSPEDKRLLVETLKGMGDVVAVTGDGTNDAPALKLADVGFSMGISGTEVAREASDIILMTDDFSAIVNAIKWGRCVSVSIKKFIQFQLIVNITAVILTFVSSVASSDETSVLTAVQLLWINLIMDTLAALALATDKPDPNIMDRKPRGRSTSLISVSTWKMILSQATLQLIVTFILHFYGPELFFKKHEDEITSHQQQQLNAMTFNTFVWLQFFTMLVSRKLDEGDGISNWRGRISAANLNFFQDLGRNYYFLTIMAIIGSCQVLIMFFGGAPFSIARQTKSMWITAVLCGMLSLIMGVLVRICPDEVAVKVFPAAFVQRFKYVFGLEFLRKNHTGKHDDEEALLEESDSPESTAFY.

The interval 1-24 is disordered; the sequence is MSRQDENSALLANNENNKPSYTGN. Topologically, residues 1-114 are cytoplasmic; it reads MSRQDENSAL…LQLVWAAFND (114 aa). The segment covering 7 to 17 has biased composition (low complexity); sequence NSALLANNENN. Residues 115 to 139 form a helical membrane-spanning segment; sequence KTMQLLTVAAVVSFVLGLYELWMQP. The Vacuolar segment spans residues 140–152; the sequence is PQYDPEGNKIKQV. A helical transmembrane segment spans residues 153-173; sequence DWIEGVAIMIAVFVVVLVSAA. The Cytoplasmic segment spans residues 174 to 349; sequence NDYQKELQFA…LADNISVYGC (176 aa). A helical transmembrane segment spans residues 350–368; the sequence is VSAIILFLVLFTRYLFYII. The Vacuolar segment spans residues 369 to 388; that stretch reads PEDGRFHDLDPAQKGSKFMN. A helical membrane pass occupies residues 389 to 409; that stretch reads IFITSITVIVVAVPEGLPLAV. Ca(2+) contacts are provided by V398 and E403. The Cytoplasmic portion of the chain corresponds to 410–899; that stretch reads TLALAFATTR…RCVSVSIKKF (490 aa). The active-site 4-aspartylphosphate intermediate is the D445. Mg(2+)-binding residues include D445 and T447. ATP is bound by residues T447, K643, 762–764, R816, and K822; that span reads TGD. D841 is a binding site for Mg(2+). N844 contacts ATP. Residues 900–922 form a helical membrane-spanning segment; it reads IQFQLIVNITAVILTFVSSVASS. N907 provides a ligand contact to Ca(2+). Residues 923–929 lie on the Vacuolar side of the membrane; it reads DETSVLT. The helical transmembrane segment at 930-950 threads the bilayer; sequence AVQLLWINLIMDTLAALALAT. Ca(2+)-binding residues include N937 and D941. The Cytoplasmic segment spans residues 951 to 976; that stretch reads DKPDPNIMDRKPRGRSTSLISVSTWK. Residues 977–998 traverse the membrane as a helical segment; that stretch reads MILSQATLQLIVTFILHFYGPE. Over 999-1010 the chain is Vacuolar; it reads LFFKKHEDEITS. The helical transmembrane segment at 1011–1029 threads the bilayer; that stretch reads HQQQQLNAMTFNTFVWLQF. Residues 1030 to 1065 are Cytoplasmic-facing; that stretch reads FTMLVSRKLDEGDGISNWRGRISAANLNFFQDLGRN. A helical transmembrane segment spans residues 1066-1086; it reads YYFLTIMAIIGSCQVLIMFFG. Residues 1087 to 1099 are Vacuolar-facing; that stretch reads GAPFSIARQTKSM. A helical membrane pass occupies residues 1100–1120; the sequence is WITAVLCGMLSLIMGVLVRIC. Residues 1121-1173 lie on the Cytoplasmic side of the membrane; the sequence is PDEVAVKVFPAAFVQRFKYVFGLEFLRKNHTGKHDDEEALLEESDSPESTAFY.

Belongs to the cation transport ATPase (P-type) (TC 3.A.3) family.

The protein localises to the vacuole membrane. It carries out the reaction Ca(2+)(in) + ATP + H2O = Ca(2+)(out) + ADP + phosphate + H(+). This magnesium-dependent enzyme catalyzes the hydrolysis of ATP coupled with the transport of calcium. Transports the calcium to the vacuole and participates in the control of the cytosolic free calcium. The chain is Calcium-transporting ATPase 2 (PMC1) from Saccharomyces cerevisiae (strain ATCC 204508 / S288c) (Baker's yeast).